We begin with the raw amino-acid sequence, 126 residues long: Small ribosomal subunit protein uS11 (126 aa).

The protein belongs to the universal ribosomal protein uS11 family. As to quaternary structure, part of the 30S ribosomal subunit. Interacts with proteins S7 and S18. Binds to IF-3.

In terms of biological role, located on the platform of the 30S subunit, it bridges several disparate RNA helices of the 16S rRNA. Forms part of the Shine-Dalgarno cleft in the 70S ribosome. In Ehrlichia chaffeensis (strain ATCC CRL-10679 / Arkansas), this protein is Small ribosomal subunit protein uS11.